The chain runs to 132 residues: Small ribosomal subunit protein uS8 (132 aa).

It belongs to the universal ribosomal protein uS8 family. In terms of assembly, part of the 30S ribosomal subunit. Contacts proteins S5 and S12.

In terms of biological role, one of the primary rRNA binding proteins, it binds directly to 16S rRNA central domain where it helps coordinate assembly of the platform of the 30S subunit. The protein is Small ribosomal subunit protein uS8 of Staphylococcus aureus (strain USA300).